Reading from the N-terminus, the 138-residue chain is MTQMTVQVVTPDGIKYDHHAKFISVTTPDGEMGILPNHINVIAPLQVHEMKIRRVSEDDRVDWVAINGGIIEIKDNVVTIVADSAERDRDIDVSRAERAKLRAERDIAEAETTHDIDEVRRAKVALRRALNRINVSKK.

The protein belongs to the ATPase epsilon chain family. As to quaternary structure, F-type ATPases have 2 components, CF(1) - the catalytic core - and CF(0) - the membrane proton channel. CF(1) has five subunits: alpha(3), beta(3), gamma(1), delta(1), epsilon(1). CF(0) has three main subunits: a, b and c.

The protein resides in the cell membrane. In terms of biological role, produces ATP from ADP in the presence of a proton gradient across the membrane. This is ATP synthase epsilon chain from Streptococcus equi subsp. equi (strain 4047).